The chain runs to 90 residues: Small ribosomal subunit protein uS15 (90 aa).

It belongs to the universal ribosomal protein uS15 family. Part of the 30S ribosomal subunit. Forms a bridge to the 50S subunit in the 70S ribosome, contacting the 23S rRNA.

One of the primary rRNA binding proteins, it binds directly to 16S rRNA where it helps nucleate assembly of the platform of the 30S subunit by binding and bridging several RNA helices of the 16S rRNA. Functionally, forms an intersubunit bridge (bridge B4) with the 23S rRNA of the 50S subunit in the ribosome. The polypeptide is Small ribosomal subunit protein uS15 (Aquifex aeolicus (strain VF5)).